Here is a 334-residue protein sequence, read N- to C-terminus: Glycerol-3-phosphate dehydrogenase [NAD(P)+] 2 (334 aa).

The NADPH site is built by W16, R36, R37, and K110. Residues K110 and G140 each coordinate sn-glycerol 3-phosphate. An NADPH-binding site is contributed by A144. 5 residues coordinate sn-glycerol 3-phosphate: K195, D248, S258, R259, and N260. The active-site Proton acceptor is the K195. R259 serves as a coordination point for NADPH. NADPH contacts are provided by V282 and E284.

It belongs to the NAD-dependent glycerol-3-phosphate dehydrogenase family.

It localises to the cytoplasm. It carries out the reaction sn-glycerol 3-phosphate + NAD(+) = dihydroxyacetone phosphate + NADH + H(+). The enzyme catalyses sn-glycerol 3-phosphate + NADP(+) = dihydroxyacetone phosphate + NADPH + H(+). Its pathway is membrane lipid metabolism; glycerophospholipid metabolism. Functionally, catalyzes the reduction of the glycolytic intermediate dihydroxyacetone phosphate (DHAP) to sn-glycerol 3-phosphate (G3P), the key precursor for phospholipid synthesis. The polypeptide is Glycerol-3-phosphate dehydrogenase [NAD(P)+] 2 (Mycobacterium bovis (strain ATCC BAA-935 / AF2122/97)).